The following is a 152-amino-acid chain: Transcription elongation factor Spt5 (152 aa).

The region spanning 99 to 128 (PGDVVEVISGPFRGTQAQVIRVEEAKGEVV) is the KOW domain.

This sequence belongs to the archaeal Spt5 family. In terms of assembly, heterodimer composed of Spt4 and Spt5. Interacts with RNA polymerase (RNAP).

Functionally, stimulates transcription elongation. This chain is Transcription elongation factor Spt5, found in Saccharolobus solfataricus (strain ATCC 35092 / DSM 1617 / JCM 11322 / P2) (Sulfolobus solfataricus).